The primary structure comprises 312 residues: DNA-directed RNA polymerase subunit alpha (312 aa).

The alpha N-terminal domain (alpha-NTD) stretch occupies residues 1-226; the sequence is MIEFEKPIIT…EHLNLFTDLT (226 aa). The tract at residues 242-312 is alpha C-terminal domain (alpha-CTD); the sequence is NDEKVLDRTI…DLGLGLKNDK (71 aa).

Belongs to the RNA polymerase alpha chain family. As to quaternary structure, homodimer. The RNAP catalytic core consists of 2 alpha, 1 beta, 1 beta' and 1 omega subunit. When a sigma factor is associated with the core the holoenzyme is formed, which can initiate transcription.

It catalyses the reaction RNA(n) + a ribonucleoside 5'-triphosphate = RNA(n+1) + diphosphate. In terms of biological role, DNA-dependent RNA polymerase catalyzes the transcription of DNA into RNA using the four ribonucleoside triphosphates as substrates. In Streptococcus agalactiae serotype Ia (strain ATCC 27591 / A909 / CDC SS700), this protein is DNA-directed RNA polymerase subunit alpha.